A 461-amino-acid polypeptide reads, in one-letter code: V-type ATP synthase beta chain (461 aa).

The protein belongs to the ATPase alpha/beta chains family.

In terms of biological role, produces ATP from ADP in the presence of a proton gradient across the membrane. The V-type beta chain is a regulatory subunit. The chain is V-type ATP synthase beta chain from Streptococcus pneumoniae (strain CGSP14).